The following is a 316-amino-acid chain: MSSEGLMVFTGNANPKLAEAVVKHLNIPLGKALVGRFSDGEVQVEIQENVRGKHVFILQSTCAPTNDNLMELMVMVDALKRASARRITAAIPYFGYARQDRRPRSARVAISAKVVANMLEVAGVERVLTMDLHADQIQGFFDIPVDNIYASPILLEDLRKKNYDNLLVVSPDVGGVVRARALAKQLGVDLAIIDKRRPKANVAEVMNIIGEVEGRNCVIMDDMIDTGGTLCKAAQVLKERGAKQVFSYCTHPVLSGGAAARIADSALDEVVVTDTIPLRDDAAQCGKIRQLSTAPLLAETFTRIVRGDSIMSLFAE.

ATP contacts are provided by residues 39 to 41 and 98 to 99; these read DGE and RQ. Histidine 133 and aspartate 172 together coordinate Mg(2+). The active site involves lysine 195. Residues arginine 197, aspartate 221, and 225–229 each bind D-ribose 5-phosphate; that span reads DTGGT.

This sequence belongs to the ribose-phosphate pyrophosphokinase family. Class I subfamily. In terms of assembly, homohexamer. The cofactor is Mg(2+).

It localises to the cytoplasm. The enzyme catalyses D-ribose 5-phosphate + ATP = 5-phospho-alpha-D-ribose 1-diphosphate + AMP + H(+). Its pathway is metabolic intermediate biosynthesis; 5-phospho-alpha-D-ribose 1-diphosphate biosynthesis; 5-phospho-alpha-D-ribose 1-diphosphate from D-ribose 5-phosphate (route I): step 1/1. Its function is as follows. Involved in the biosynthesis of the central metabolite phospho-alpha-D-ribosyl-1-pyrophosphate (PRPP) via the transfer of pyrophosphoryl group from ATP to 1-hydroxyl of ribose-5-phosphate (Rib-5-P). The protein is Ribose-phosphate pyrophosphokinase of Ralstonia nicotianae (strain ATCC BAA-1114 / GMI1000) (Ralstonia solanacearum).